We begin with the raw amino-acid sequence, 208 residues long: Recombination protein RecR (208 aa).

The C4-type zinc-finger motif lies at 57–72 (CALCNTLTEQEVCVTC). In terms of domain architecture, Toprim spans 80–187 (SKLCVVETPA…QVTRLARGVP (108 aa)).

This sequence belongs to the RecR family.

Functionally, may play a role in DNA repair. It seems to be involved in an RecBC-independent recombinational process of DNA repair. It may act with RecF and RecO. This is Recombination protein RecR from Polaromonas naphthalenivorans (strain CJ2).